Reading from the N-terminus, the 463-residue chain is NEDD8-activating enzyme E1 catalytic subunit (463 aa).

N-acetylalanine is present on alanine 2. Residues 53–70 form an interaction with UBE2M N-terminus region; sequence HPDFEPSTESLQFLLDTC. Residues 100 to 124 and 148 to 171 each bind ATP; these read DMDTIDVSNLNRQFLFRPKDIGRPK and IQDFNDTFYRQFHIIVCGLDSIIA. Interaction with UBE2M N-terminus regions lie at residues 157–161 and 192–217; these read RQFHI and PSSIVPLIDGGTEGFKGNARVILPGM. Residues 227–229 form an interaction with NEDD8 region; the sequence is LYP. Cysteine 237 serves as the catalytic Glycyl thioester intermediate. 2 interaction with NAE1 regions span residues 242-248 and 292-295; these read MPRLPEH and YNIR. The tract at residues 331 to 338 is interaction with UBE2M N-terminus; sequence IATSAYIP. The segment at 352–357 is interaction with NEDD8; the sequence is YTYTFE. The segment at 368–463 is interaction with UBE2M core domain; sequence SQLPQNIQFS…TVLFKLHFTS (96 aa).

The protein belongs to the ubiquitin-activating E1 family. UBA3 subfamily. As to quaternary structure, heterodimer of UBA3 and NAE1. Interacts with NEDD8, UBE2F and UBE2M. Binds ESR1 and ESR2 with bound steroid ligand. Interacts with TBATA. Ubiquitously expressed.

It carries out the reaction ATP + [NEDD8 protein] + [E1 NEDD8-activating enzyme]-L-cysteine = AMP + diphosphate + [E1 NEDD8-activating enzyme]-S-[NEDD8 protein]-yl-L-cysteine.. The protein operates within protein modification; protein neddylation. Binding of TP53BP2 to the regulatory subunit NAE1 decreases activity. In terms of biological role, catalytic subunit of the dimeric UBA3-NAE1 E1 enzyme. E1 activates NEDD8 by first adenylating its C-terminal glycine residue with ATP, thereafter linking this residue to the side chain of the catalytic cysteine, yielding a NEDD8-UBA3 thioester and free AMP. E1 finally transfers NEDD8 to the catalytic cysteine of UBE2M. Down-regulates steroid receptor activity. Necessary for cell cycle progression. The polypeptide is NEDD8-activating enzyme E1 catalytic subunit (UBA3) (Homo sapiens (Human)).